The sequence spans 210 residues: Thiamine-phosphate synthase (210 aa).

4-amino-2-methyl-5-(diphosphooxymethyl)pyrimidine contacts are provided by residues 43 to 47 (QLREK) and Asn-75. Residues Asp-76 and Asp-95 each contribute to the Mg(2+) site. Residue Ser-114 coordinates 4-amino-2-methyl-5-(diphosphooxymethyl)pyrimidine. 2-[(2R,5Z)-2-carboxy-4-methylthiazol-5(2H)-ylidene]ethyl phosphate is bound at residue 140-142 (TST). Residue Lys-143 coordinates 4-amino-2-methyl-5-(diphosphooxymethyl)pyrimidine. 2-[(2R,5Z)-2-carboxy-4-methylthiazol-5(2H)-ylidene]ethyl phosphate-binding positions include Gly-170 and 190–191 (IS).

The protein belongs to the thiamine-phosphate synthase family. The cofactor is Mg(2+).

It catalyses the reaction 2-[(2R,5Z)-2-carboxy-4-methylthiazol-5(2H)-ylidene]ethyl phosphate + 4-amino-2-methyl-5-(diphosphooxymethyl)pyrimidine + 2 H(+) = thiamine phosphate + CO2 + diphosphate. It carries out the reaction 2-(2-carboxy-4-methylthiazol-5-yl)ethyl phosphate + 4-amino-2-methyl-5-(diphosphooxymethyl)pyrimidine + 2 H(+) = thiamine phosphate + CO2 + diphosphate. The enzyme catalyses 4-methyl-5-(2-phosphooxyethyl)-thiazole + 4-amino-2-methyl-5-(diphosphooxymethyl)pyrimidine + H(+) = thiamine phosphate + diphosphate. It functions in the pathway cofactor biosynthesis; thiamine diphosphate biosynthesis; thiamine phosphate from 4-amino-2-methyl-5-diphosphomethylpyrimidine and 4-methyl-5-(2-phosphoethyl)-thiazole: step 1/1. Its function is as follows. Condenses 4-methyl-5-(beta-hydroxyethyl)thiazole monophosphate (THZ-P) and 2-methyl-4-amino-5-hydroxymethyl pyrimidine pyrophosphate (HMP-PP) to form thiamine monophosphate (TMP). This is Thiamine-phosphate synthase from Clostridioides difficile (strain 630) (Peptoclostridium difficile).